A 274-amino-acid chain; its full sequence is HTH-type transcriptional regulator GadX (274 aa).

The HTH araC/xylS-type domain occupies 145 to 242; it reads TRVCTVINNN…GMTPTEYQER (98 aa). DNA-binding regions (H-T-H motif) lie at residues 162–183 and 209–232; these read ARIA…REEE and IKRV…RNYY.

As to quaternary structure, homodimer.

In terms of biological role, positively regulates the expression of about fifteen genes involved in acid resistance such as gadA, gadB and gadC. Depending on the conditions (growth phase and medium), can repress gadW. The sequence is that of HTH-type transcriptional regulator GadX (gadX) from Shigella flexneri.